An 88-amino-acid chain; its full sequence is CRISPR-associated endoribonuclease Cas2 2 (88 aa).

Asp-8 provides a ligand contact to Mg(2+).

This sequence belongs to the CRISPR-associated endoribonuclease Cas2 protein family. Homodimer, forms a heterotetramer with a Cas1 homodimer. Mg(2+) serves as cofactor.

Its function is as follows. CRISPR (clustered regularly interspaced short palindromic repeat), is an adaptive immune system that provides protection against mobile genetic elements (viruses, transposable elements and conjugative plasmids). CRISPR clusters contain sequences complementary to antecedent mobile elements and target invading nucleic acids. CRISPR clusters are transcribed and processed into CRISPR RNA (crRNA). Functions as a ssRNA-specific endoribonuclease. Involved in the integration of spacer DNA into the CRISPR cassette. The protein is CRISPR-associated endoribonuclease Cas2 2 (cas22) of Saccharolobus solfataricus (strain ATCC 35092 / DSM 1617 / JCM 11322 / P2) (Sulfolobus solfataricus).